Consider the following 645-residue polypeptide: Minor extracellular protease Epr (645 aa).

Positions 1–27 (MKNMSCKLVVSVTLFFSFLTIGPLAHA) are cleaved as a signal peptide. The propeptide occupies 28 to 103 (QNSSEKEVIV…AADSTDFKVL (76 aa)). The 268-residue stretch at 115–382 (QWNLEPIQVK…YGLIQYKAQA (268 aa)) folds into the Peptidase S8 domain. Active-site charge relay system residues include D142, H172, and S326. Disordered regions lie at residues 490 to 577 (KQAK…KTAL) and 591 to 645 (AEAK…KPKK). Residues 491-508 (QAKDKVAKAEKSKKKTDV) are compositionally biased toward basic and acidic residues. The segment covering 522-547 (SEKTSLQKRLNKVKSTNLKTAQQSVS) has biased composition (polar residues). Basic and acidic residues predominate over residues 592 to 610 (EAKKVETAKAKVKKAEKDK).

This sequence belongs to the peptidase S8 family. In terms of processing, may undergo two steps of processing in its passage through the cell membrane: removal of the N-terminal signal sequence and cleavage of the C-terminal domain. Several active forms of Epr with molecular masses between 40 and 34 kDa were found in the medium of B.subtilis cultures. The size variation of the active forms expressed by the complete epr gene appears to be the result of partial removal of the C-terminus either by processing or degradation.

It localises to the secreted. It is found in the cell wall. Its activity is regulated as follows. Requires Ca(2+) for stability. Activity is inhibited by phenylmethylsulfonyl fluoride (PMSF) and EDTA. Its function is as follows. Serine protease. Involved in the production of the competence and sporulation stimulating factor CSF. In addition, is essential for swarming motility. Plays a key role in DegU-mediated swarming motility. The protease activity is dispensable for swarming. Not essential for growth or sporulation. This chain is Minor extracellular protease Epr, found in Bacillus subtilis (strain 168).